The following is a 112-amino-acid chain: Nitrogen regulatory protein P-II (112 aa).

Residue Y51 is modified to O-UMP-tyrosine.

Belongs to the P(II) protein family. Homotrimer.

Its function is as follows. In nitrogen-limiting conditions, when the ratio of Gln to 2-ketoglutarate decreases, P-II is uridylylated to P-II-UMP. P-II-UMP allows the deadenylation of glutamine synthetase (GS), thus activating the enzyme. Conversely, in nitrogen excess P-II is deuridylated and promotes the adenylation of GS. P-II indirectly controls the transcription of the GS gene (glnA). P-II prevents NR-II-catalyzed conversion of NR-I to NR-I-phosphate, the transcriptional activator of glnA. When P-II is uridylylated to P-II-UMP, these events are reversed. This is Nitrogen regulatory protein P-II (glnB) from Mycobacterium bovis (strain ATCC BAA-935 / AF2122/97).